A 115-amino-acid polypeptide reads, in one-letter code: NADH-ubiquinone oxidoreductase chain 3 (115 aa).

3 helical membrane-spanning segments follow: residues 3–23, 55–75, and 84–104; these read LMLALTVNTLLTALLTIIMFW, FFLVAITFLLFDLEIALLLSL, and LPTMIKTSIMFITILALSLAY.

The protein belongs to the complex I subunit 3 family. Core subunit of respiratory chain NADH dehydrogenase (Complex I) which is composed of 45 different subunits. Interacts with TMEM186. Interacts with TMEM242.

Its subcellular location is the mitochondrion inner membrane. The catalysed reaction is a ubiquinone + NADH + 5 H(+)(in) = a ubiquinol + NAD(+) + 4 H(+)(out). In terms of biological role, core subunit of the mitochondrial membrane respiratory chain NADH dehydrogenase (Complex I) which catalyzes electron transfer from NADH through the respiratory chain, using ubiquinone as an electron acceptor. Essential for the catalytic activity of complex I. This chain is NADH-ubiquinone oxidoreductase chain 3, found in Papio hamadryas (Hamadryas baboon).